The following is a 206-amino-acid chain: Large ribosomal subunit protein uL4 (206 aa).

It belongs to the universal ribosomal protein uL4 family. Part of the 50S ribosomal subunit.

Functionally, one of the primary rRNA binding proteins, this protein initially binds near the 5'-end of the 23S rRNA. It is important during the early stages of 50S assembly. It makes multiple contacts with different domains of the 23S rRNA in the assembled 50S subunit and ribosome. Its function is as follows. Forms part of the polypeptide exit tunnel. This chain is Large ribosomal subunit protein uL4, found in Methylobacterium radiotolerans (strain ATCC 27329 / DSM 1819 / JCM 2831 / NBRC 15690 / NCIMB 10815 / 0-1).